We begin with the raw amino-acid sequence, 151 residues long: Ribosomal RNA large subunit methyltransferase H (151 aa).

S-adenosyl-L-methionine contacts are provided by residues G100 and 119–124 (LSRMTF).

The protein belongs to the RNA methyltransferase RlmH family. Homodimer.

It localises to the cytoplasm. It carries out the reaction pseudouridine(1915) in 23S rRNA + S-adenosyl-L-methionine = N(3)-methylpseudouridine(1915) in 23S rRNA + S-adenosyl-L-homocysteine + H(+). In terms of biological role, specifically methylates the pseudouridine at position 1915 (m3Psi1915) in 23S rRNA. This chain is Ribosomal RNA large subunit methyltransferase H, found in Thermotoga neapolitana (strain ATCC 49049 / DSM 4359 / NBRC 107923 / NS-E).